Reading from the N-terminus, the 241-residue chain is Phosphoribosylaminoimidazole-succinocarboxamide synthase (241 aa).

It belongs to the SAICAR synthetase family.

It carries out the reaction 5-amino-1-(5-phospho-D-ribosyl)imidazole-4-carboxylate + L-aspartate + ATP = (2S)-2-[5-amino-1-(5-phospho-beta-D-ribosyl)imidazole-4-carboxamido]succinate + ADP + phosphate + 2 H(+). Its pathway is purine metabolism; IMP biosynthesis via de novo pathway; 5-amino-1-(5-phospho-D-ribosyl)imidazole-4-carboxamide from 5-amino-1-(5-phospho-D-ribosyl)imidazole-4-carboxylate: step 1/2. The polypeptide is Phosphoribosylaminoimidazole-succinocarboxamide synthase (Oenococcus oeni (strain ATCC BAA-331 / PSU-1)).